Consider the following 876-residue polypeptide: Liprin-beta-2 (876 aa).

Positions 101-313 form a coiled coil; it reads AASNETYQER…TGLLNQYRKV (213 aa). A phosphoserine mark is found at S329, S363, and S387. A disordered region spans residues 356–376; sequence EMPPRCSSPTVGPPPLPQKSL. 2 disordered regions span residues 425 to 451 and 470 to 500; these read LPGK…PDAT and VVND…PKGI. The segment covering 473-489 has biased composition (polar residues); sequence DLSSTSSGTESGPQSPL. S512 carries the phosphoserine modification. The disordered stretch occupies residues 527-553; it reads RGGLRATAGPRLSRTRDSKGQKSDANA. 3 SAM domains span residues 558-622, 630-693, and 718-783; these read WSTE…INTK, LDHI…LHVN, and WSNH…KFNA.

It belongs to the liprin family. Liprin-beta subfamily. In terms of assembly, forms homodimers and heterodimers. In terms of tissue distribution, widely expressed.

Its function is as follows. May regulate the disassembly of focal adhesions. Did not bind receptor-like tyrosine phosphatases type 2A. This chain is Liprin-beta-2 (PPFIBP2), found in Homo sapiens (Human).